Reading from the N-terminus, the 81-residue chain is Cytochrome b559 subunit alpha (81 aa).

A helical membrane pass occupies residues 21–35 (VIHALTIPALFLAGW). Heme is bound at residue His23.

The protein belongs to the PsbE/PsbF family. In terms of assembly, heterodimer of an alpha subunit and a beta subunit. PSII is composed of 1 copy each of membrane proteins PsbA, PsbB, PsbC, PsbD, PsbE, PsbF, PsbH, PsbI, PsbJ, PsbK, PsbL, PsbM, PsbT, PsbX, PsbY, PsbZ, Psb30/Ycf12, peripheral proteins PsbO, CyanoQ (PsbQ), PsbU, PsbV and a large number of cofactors. It forms dimeric complexes. Requires heme b as cofactor.

The protein localises to the cellular thylakoid membrane. In terms of biological role, this b-type cytochrome is tightly associated with the reaction center of photosystem II (PSII). PSII is a light-driven water:plastoquinone oxidoreductase that uses light energy to abstract electrons from H(2)O, generating O(2) and a proton gradient subsequently used for ATP formation. It consists of a core antenna complex that captures photons, and an electron transfer chain that converts photonic excitation into a charge separation. This Synechococcus sp. (strain JA-2-3B'a(2-13)) (Cyanobacteria bacterium Yellowstone B-Prime) protein is Cytochrome b559 subunit alpha.